Here is a 65-residue protein sequence, read N- to C-terminus: Large ribosomal subunit protein bL35 (65 aa).

Residues Met-1–Arg-40 are disordered. A compositionally biased stretch (basic residues) spans Lys-21 to Arg-40.

This sequence belongs to the bacterial ribosomal protein bL35 family.

This Bacteroides fragilis (strain ATCC 25285 / DSM 2151 / CCUG 4856 / JCM 11019 / LMG 10263 / NCTC 9343 / Onslow / VPI 2553 / EN-2) protein is Large ribosomal subunit protein bL35.